Here is a 458-residue protein sequence, read N- to C-terminus: ATP synthase subunit beta (458 aa).

An ATP-binding site is contributed by 148–155; it reads GGAGVGKT.

The protein belongs to the ATPase alpha/beta chains family. As to quaternary structure, F-type ATPases have 2 components, CF(1) - the catalytic core - and CF(0) - the membrane proton channel. CF(1) has five subunits: alpha(3), beta(3), gamma(1), delta(1), epsilon(1). CF(0) has three main subunits: a(1), b(2) and c(9-12). The alpha and beta chains form an alternating ring which encloses part of the gamma chain. CF(1) is attached to CF(0) by a central stalk formed by the gamma and epsilon chains, while a peripheral stalk is formed by the delta and b chains.

It is found in the cell inner membrane. It carries out the reaction ATP + H2O + 4 H(+)(in) = ADP + phosphate + 5 H(+)(out). In terms of biological role, produces ATP from ADP in the presence of a proton gradient across the membrane. The catalytic sites are hosted primarily by the beta subunits. The chain is ATP synthase subunit beta from Francisella tularensis subsp. mediasiatica (strain FSC147).